The following is a 373-amino-acid chain: Queuine tRNA-ribosyltransferase accessory subunit 2 (373 aa).

Residues C320, C322, C325, and H351 each contribute to the Zn(2+) site.

It belongs to the queuine tRNA-ribosyltransferase family. QTRT2 subfamily. Heterodimer of a catalytic subunit and an accessory subunit. The cofactor is Zn(2+).

Its subcellular location is the cytoplasm. Functionally, non-catalytic subunit of the queuine tRNA-ribosyltransferase (TGT) that catalyzes the base-exchange of a guanine (G) residue with queuine (Q) at position 34 (anticodon wobble position) in tRNAs with GU(N) anticodons (tRNA-Asp, -Asn, -His and -Tyr), resulting in the hypermodified nucleoside queuosine (7-(((4,5-cis-dihydroxy-2-cyclopenten-1-yl)amino)methyl)-7-deazaguanosine). This chain is Queuine tRNA-ribosyltransferase accessory subunit 2, found in Caenorhabditis elegans.